Reading from the N-terminus, the 370-residue chain is Ni-sirohydrochlorin a,c-diamide reductive cyclase complex, component CfbD (370 aa).

This sequence belongs to the NifD/NifK/NifE/NifN family. Homodimer or monomer. The Ni-sirohydrochlorin a,c-diamide reductive cyclase complex is composed of a NifH homolog component CfbC and a NifD homolog component CfbD. [4Fe-4S] cluster is required as a cofactor.

It catalyses the reaction Ni-sirohydrochlorin a,c-diamide + 3 AH2 + ATP + H2O = 15,17(3)-seco-F430-17(3)-acid + 3 A + ADP + phosphate. Its function is as follows. Involved in the biosynthesis of the unique nickel-containing tetrapyrrole coenzyme F430, the prosthetic group of methyl-coenzyme M reductase (MCR), which plays a key role in methanogenesis and anaerobic methane oxidation. Catalyzes both the six-electron reduction of the tetrahydroporphyrin ring system and the gamma-lactamization of the c-acetamide side chain of Ni-sirohydrochlorin a,c-diamide to yield 15,17(3)-seco-F430-17(3)-acid (seco-F430), the last intermediate in the biosynthesis of the coenzyme F430. This Methanosarcina acetivorans (strain ATCC 35395 / DSM 2834 / JCM 12185 / C2A) protein is Ni-sirohydrochlorin a,c-diamide reductive cyclase complex, component CfbD.